The chain runs to 188 residues: MAQTTNDIKNGSVLNLDGQLWTVMKFQHVKPGKGPAFVRTTIKNVLSGKIVDKTFNAGMKMEFETVDNRTLQYSYEDGDNFVFMDMTTYDQIMVPKTLLGDKAKFLLEGTDCLVSFHDGTPLSVDLPGSVVLTITHTEPGLQGNRSNAGTKPATVETGAEIQVPLFINEGDRVKINTEDGSYTGRENN.

It belongs to the elongation factor P family.

The protein resides in the cytoplasm. Its pathway is protein biosynthesis; polypeptide chain elongation. In terms of biological role, involved in peptide bond synthesis. Stimulates efficient translation and peptide-bond synthesis on native or reconstituted 70S ribosomes in vitro. Probably functions indirectly by altering the affinity of the ribosome for aminoacyl-tRNA, thus increasing their reactivity as acceptors for peptidyl transferase. The chain is Elongation factor P from Bifidobacterium longum (strain DJO10A).